The following is a 396-amino-acid chain: Protein Njmu-R1 (396 aa).

The interval 1–78 (MLPSLQESMD…SGDDFSLSLA (78 aa)) is disordered. A phosphoserine mark is found at S8 and S18. Residues 9-24 (MDGDEKELESSEEGGS) are compositionally biased toward acidic residues. The span at 58-67 (GSPSGTNAET) shows a compositional bias: polar residues.

As to quaternary structure, component of the complex WDR11 composed of C17orf75, FAM91A1 and WDR11; FAM91A1 and WDR11 are required for proper location of the complex. Interacts with TBC1D23; this interaction may be indirect and recruits TBC1D23 to AP-1-derived vesicles. In terms of tissue distribution, highly expressed in testis and also expressed in fetal testis.

It localises to the golgi apparatus. The protein resides in the trans-Golgi network. It is found in the cytoplasmic vesicle. Its function is as follows. As component of the WDR11 complex acts together with TBC1D23 to facilitate the golgin-mediated capture of vesicles generated using AP-1. May have a role in spermatogenesis. This chain is Protein Njmu-R1 (C17orf75), found in Homo sapiens (Human).